The sequence spans 95 residues: SMAD5 antisense gene protein 1 (95 aa).

Disordered regions lie at residues 1–24 (MHKQ…SSWS) and 43–70 (SSPT…KPAN). A compositionally biased stretch (pro residues) spans 7-19 (LLPPPATPPPPPQ).

As to expression, expressed in fetal tissues.

This chain is SMAD5 antisense gene protein 1 (SMAD5-AS1), found in Homo sapiens (Human).